A 336-amino-acid polypeptide reads, in one-letter code: Holliday junction branch migration complex subunit RuvB (336 aa).

The interval 4 to 185 (ADRLISADIQ…FGIVQRLEFY (182 aa)) is large ATPase domain (RuvB-L). Residues I24, R25, G66, K69, T70, T71, 132–134 (EDY), R175, Y185, and R222 contribute to the ATP site. Residue T70 participates in Mg(2+) binding. The small ATPAse domain (RuvB-S) stretch occupies residues 186–256 (NVDDLQHIVA…IASKALDMLN (71 aa)). A head domain (RuvB-H) region spans residues 259–336 (AAGFDYLDRK…RHFNRIMEAP (78 aa)). The DNA site is built by R295, R314, and R319.

This sequence belongs to the RuvB family. Homohexamer. Forms an RuvA(8)-RuvB(12)-Holliday junction (HJ) complex. HJ DNA is sandwiched between 2 RuvA tetramers; dsDNA enters through RuvA and exits via RuvB. An RuvB hexamer assembles on each DNA strand where it exits the tetramer. Each RuvB hexamer is contacted by two RuvA subunits (via domain III) on 2 adjacent RuvB subunits; this complex drives branch migration. In the full resolvosome a probable DNA-RuvA(4)-RuvB(12)-RuvC(2) complex forms which resolves the HJ.

The protein resides in the cytoplasm. The enzyme catalyses ATP + H2O = ADP + phosphate + H(+). The RuvA-RuvB-RuvC complex processes Holliday junction (HJ) DNA during genetic recombination and DNA repair, while the RuvA-RuvB complex plays an important role in the rescue of blocked DNA replication forks via replication fork reversal (RFR). RuvA specifically binds to HJ cruciform DNA, conferring on it an open structure. The RuvB hexamer acts as an ATP-dependent pump, pulling dsDNA into and through the RuvAB complex. RuvB forms 2 homohexamers on either side of HJ DNA bound by 1 or 2 RuvA tetramers; 4 subunits per hexamer contact DNA at a time. Coordinated motions by a converter formed by DNA-disengaged RuvB subunits stimulates ATP hydrolysis and nucleotide exchange. Immobilization of the converter enables RuvB to convert the ATP-contained energy into a lever motion, pulling 2 nucleotides of DNA out of the RuvA tetramer per ATP hydrolyzed, thus driving DNA branch migration. The RuvB motors rotate together with the DNA substrate, which together with the progressing nucleotide cycle form the mechanistic basis for DNA recombination by continuous HJ branch migration. Branch migration allows RuvC to scan DNA until it finds its consensus sequence, where it cleaves and resolves cruciform DNA. This chain is Holliday junction branch migration complex subunit RuvB, found in Proteus mirabilis (strain HI4320).